Reading from the N-terminus, the 123-residue chain is rRNA-processing protein cgr-1 (123 aa).

Positions 1-13 (MSSTTTTTQTTSQ) are enriched in low complexity. Disordered stretches follow at residues 1–47 (MSST…GLTS) and 85–123 (EKRA…LINS). Residues 49-110 (EKRAKERQLL…EKMHKKRVER (62 aa)) adopt a coiled-coil conformation. Residues 85–102 (EKRAKKEEKERYEKMAEK) are compositionally biased toward basic and acidic residues. The span at 103 to 123 (MHKKRVERLKRKEKRNKLINS) shows a compositional bias: basic residues.

The protein belongs to the CGR1 family.

The protein resides in the nucleus. The protein localises to the nucleolus. Involved in nucleolar integrity and required for processing of the pre-rRNA for the 60S ribosome subunit. This is rRNA-processing protein cgr-1 (cgr-1) from Neurospora crassa (strain ATCC 24698 / 74-OR23-1A / CBS 708.71 / DSM 1257 / FGSC 987).